The primary structure comprises 70 residues: MLHEFHVRRLLKFRVESCSSIHSLSLHPLYVIMSPMDIIGFNSTSDTGIRYCSYMCLIIICCVSGELFSA.

This is an uncharacterized protein from Vaccinia virus (strain Copenhagen) (VACV).